The primary structure comprises 86 residues: Small ribosomal subunit protein bS18 (86 aa).

It belongs to the bacterial ribosomal protein bS18 family. Part of the 30S ribosomal subunit. Forms a tight heterodimer with protein bS6.

Its function is as follows. Binds as a heterodimer with protein bS6 to the central domain of the 16S rRNA, where it helps stabilize the platform of the 30S subunit. This chain is Small ribosomal subunit protein bS18, found in Campylobacter curvus (strain 525.92).